A 407-amino-acid polypeptide reads, in one-letter code: L-cysteine:1D-myo-inositol 2-amino-2-deoxy-alpha-D-glucopyranoside ligase (407 aa).

Cys-43 provides a ligand contact to Zn(2+). L-cysteinyl-5'-AMP contacts are provided by residues 43–46 (CGIT), Thr-58, and 81–83 (NAT). The 'HIGH' region signature appears at 45 to 55 (ITPYDATHLGH). A 'ERGGDP' region motif is present at residues 183-188 (QRGGDP). Trp-223 serves as a coordination point for L-cysteinyl-5'-AMP. Residue Cys-227 participates in Zn(2+) binding. An L-cysteinyl-5'-AMP-binding site is contributed by 245-247 (GSD). Zn(2+) is bound at residue His-252. L-cysteinyl-5'-AMP is bound at residue Val-279. The short motif at 285-289 (KMSKS) is the 'KMSKS' region element.

It belongs to the class-I aminoacyl-tRNA synthetase family. MshC subfamily. In terms of assembly, monomer. The cofactor is Zn(2+).

It catalyses the reaction 1D-myo-inositol 2-amino-2-deoxy-alpha-D-glucopyranoside + L-cysteine + ATP = 1D-myo-inositol 2-(L-cysteinylamino)-2-deoxy-alpha-D-glucopyranoside + AMP + diphosphate + H(+). Functionally, catalyzes the ATP-dependent condensation of GlcN-Ins and L-cysteine to form L-Cys-GlcN-Ins. This Streptosporangium roseum (strain ATCC 12428 / DSM 43021 / JCM 3005 / KCTC 9067 / NCIMB 10171 / NRRL 2505 / NI 9100) protein is L-cysteine:1D-myo-inositol 2-amino-2-deoxy-alpha-D-glucopyranoside ligase.